A 107-amino-acid polypeptide reads, in one-letter code: uncharacterized protein (107 aa).

A helical transmembrane segment spans residues 9–31; it reads AAAIITAPTILAMMSTVLRALIF.

The protein resides in the membrane. This is an uncharacterized protein from Archaeoglobus fulgidus (strain ATCC 49558 / DSM 4304 / JCM 9628 / NBRC 100126 / VC-16).